Consider the following 60-residue polypeptide: Hemocyte defensin Cg-Defh1 (60 aa).

The first 17 residues, 1–17 (LFTLVVLLMVSADMAFA), serve as a signal peptide directing secretion. Residues Phe19, Gly20, and Cys21 each contribute to the beta-D-GlcNAc-(1-&gt;4)-Mur2Ac(oyl-L-Ala-gamma-D-Glu-L-Lys-D-Ala-D-Ala)-di-trans,octa-cis-undecaprenyl diphosphate site. 4 disulfide bridges follow: Cys21-Cys42, Cys28-Cys51, Cys32-Cys53, and Cys37-Cys56. A binds to membrane interface region spans residues 22-25 (PRDQ). Beta-D-GlcNAc-(1-&gt;4)-Mur2Ac(oyl-L-Ala-gamma-D-Glu-L-Lys-D-Ala-D-Ala)-di-trans,octa-cis-undecaprenyl diphosphate is bound at residue His31. A binds to membrane interface region spans residues 43 to 49 (DAVTLWL). Residue Cys51 participates in beta-D-GlcNAc-(1-&gt;4)-Mur2Ac(oyl-L-Ala-gamma-D-Glu-L-Lys-D-Ala-D-Ala)-di-trans,octa-cis-undecaprenyl diphosphate binding.

It belongs to the invertebrate defensin family. Expressed in hemocytes.

It is found in the secreted. Its subcellular location is the target cell membrane. Its function is as follows. Antibacterial peptide mostly active against Gram-positive bacteria. It acts by selectively inhibiting peptidoglycan biosynthesis through complex formation with the cell wall precursor lipid II (1:1 molar ratio) thus inhibiting cell wall synthesis. It does not disrupt cell membranes. Is noticeably less potent than Cg-Defh2 and Cg-Defm. Shows no or limited activities against Gram-negative bacteria. The polypeptide is Hemocyte defensin Cg-Defh1 (Magallana gigas (Pacific oyster)).